A 364-amino-acid polypeptide reads, in one-letter code: SH3 and cysteine-rich domain-containing protein 3 (364 aa).

2 disordered regions span residues 1 to 89 and 189 to 244; these read MTEK…NDKP and NKER…HKQP. The segment covering 64–78 has biased composition (acidic residues); the sequence is YEEEEEEEEEEEEPP. The Phorbol-ester/DAG-type zinc finger occupies 89-140; sequence PHKFKDHFFKKPKFCDVCARMIVLNNKFGLRCKNCKTNIHEHCQSYVEMQRC. Positions 212–242 are enriched in basic and acidic residues; it reads ESARPEEGKPQDGNPEGDKKAEKKTPDDKHK. 2 SH3 domains span residues 247-306 and 307-364; these read QQSH…RVRA and GERV…LEEI.

As to quaternary structure, interacts (via SH3 domains) with the calcium channels CACNA1S and CACNA1C. Component of a calcium channel complex with CACNA1S and CACNB1. Component of a calcium channel complex with CACNA1C and CACNB1.

Its subcellular location is the cytoplasm. It is found in the cell membrane. The protein resides in the sarcolemma. The protein localises to the T-tubule. Its function is as follows. Required for normal excitation-contraction coupling in skeletal muscle and for normal muscle contraction in response to membrane depolarization. Required for normal Ca(2+) release from the sarcplasmic reticulum, which ultimately leads to muscle contraction. Probably functions via its effects on muscle calcium channels. Increases CACNA1S channel activity, in addition to its role in enhancing the expression of CACNA1S at the cell membrane. Has a redundant role in promoting the expression of the calcium channel CACNA1S at the cell membrane. Slows down the inactivation rate of the calcium channel CACNA1C. The polypeptide is SH3 and cysteine-rich domain-containing protein 3 (STAC3) (Homo sapiens (Human)).